A 141-amino-acid polypeptide reads, in one-letter code: Hemoglobin subunit alpha (141 aa).

A Globin domain is found at 1-141 (VLSSKDKANV…VSTVLTSKYR (141 aa)). Ser-3 is subject to Phosphoserine. 2 positions are modified to N6-succinyllysine: Lys-7 and Lys-11. Lys-16 bears the N6-acetyllysine; alternate mark. Position 16 is an N6-succinyllysine; alternate (Lys-16). Residue Tyr-24 is modified to Phosphotyrosine. Residue Lys-40 is modified to N6-succinyllysine. Ser-49 carries the phosphoserine modification. His-58 is a binding site for O2. His-87 provides a ligand contact to heme b. At Ser-102 the chain carries Phosphoserine. Thr-108 carries the phosphothreonine modification. Ser-124 is subject to Phosphoserine. Residues Thr-134 and Thr-137 each carry the phosphothreonine modification. Ser-138 is subject to Phosphoserine.

This sequence belongs to the globin family. In terms of assembly, heterotetramer of two alpha chains and two beta chains. In terms of tissue distribution, red blood cells.

Its function is as follows. Involved in oxygen transport from the lung to the various peripheral tissues. Functionally, hemopressin acts as an antagonist peptide of the cannabinoid receptor CNR1. Hemopressin-binding efficiently blocks cannabinoid receptor CNR1 and subsequent signaling. This is Hemoglobin subunit alpha (HBA) from Lama vicugna (Vicugna).